A 390-amino-acid chain; its full sequence is Phosphopentomutase (390 aa).

Residues Asp10, Asp284, His289, Asp325, His326, and His337 each coordinate Mn(2+).

It belongs to the phosphopentomutase family. Requires Mn(2+) as cofactor.

It localises to the cytoplasm. The enzyme catalyses 2-deoxy-alpha-D-ribose 1-phosphate = 2-deoxy-D-ribose 5-phosphate. It carries out the reaction alpha-D-ribose 1-phosphate = D-ribose 5-phosphate. The protein operates within carbohydrate degradation; 2-deoxy-D-ribose 1-phosphate degradation; D-glyceraldehyde 3-phosphate and acetaldehyde from 2-deoxy-alpha-D-ribose 1-phosphate: step 1/2. Its function is as follows. Isomerase that catalyzes the conversion of deoxy-ribose 1-phosphate (dRib-1-P) and ribose 1-phosphate (Rib-1-P) to deoxy-ribose 5-phosphate (dRib-5-P) and ribose 5-phosphate (Rib-5-P), respectively. In Clostridioides difficile (strain 630) (Peptoclostridium difficile), this protein is Phosphopentomutase.